The chain runs to 226 residues: Uridylate kinase (226 aa).

ATP is bound at residue 6-10 (KISGK). Gly43 serves as a coordination point for UMP. Gly44 and Arg48 together coordinate ATP. Residues Asp65 and 113–119 (FQPGQST) each bind UMP. The ATP site is built by Thr139, Asn140, Tyr145, and Asp148.

The protein belongs to the UMP kinase family. As to quaternary structure, homohexamer.

The protein localises to the cytoplasm. It catalyses the reaction UMP + ATP = UDP + ADP. It functions in the pathway pyrimidine metabolism; CTP biosynthesis via de novo pathway; UDP from UMP (UMPK route): step 1/1. With respect to regulation, inhibited by UTP. Functionally, catalyzes the reversible phosphorylation of UMP to UDP. In Saccharolobus islandicus (strain M.16.27) (Sulfolobus islandicus), this protein is Uridylate kinase.